Reading from the N-terminus, the 265-residue chain is Protein N-terminal and lysine N-methyltransferase EFM7 (265 aa).

The tract at residues 1 to 25 is disordered; the sequence is MSSDHEEDSLYGATELFGEPDGFYE. S-adenosyl-L-methionine-binding positions include Trp-67, 93 to 95, Asp-115, Trp-152, and Ser-176; that span reads GAA.

It belongs to the class I-like SAM-binding methyltransferase superfamily. EFM7 family.

It is found in the cytoplasm. S-adenosyl-L-methionine-dependent protein methyltransferase that trimethylates the N-terminal glycine 'Gly-2' of elongation factor 1-alpha, before also catalyzing the mono- and dimethylation of 'Lys-3'. In Eremothecium gossypii (strain ATCC 10895 / CBS 109.51 / FGSC 9923 / NRRL Y-1056) (Yeast), this protein is Protein N-terminal and lysine N-methyltransferase EFM7.